Consider the following 448-residue polypeptide: MSDNVPTIAAVATAPGRGGVGVIRISGKNLLPMAQALCGKTPKPRVATYADFTDADGQAIDSGLLLFFAAPASFTGEDVIELQGHGGPVVMDMLLNRCLELGARLAEPGEFTKRAFLNDKLDLAQAEGVADLIDASSRSAARLALRSLKGDFSRRIHGLVEDLITLRMLVEATLDFPEEDIDFLEAADARGKLDGLRRAVDDVLANAQQGAILREGLNVVLVGAPNVGKSSLLNALAGDEVAIVTDIAGTTRDAVRERILIDGVPVHIVDTAGLRETDDVVERIGIERSRKAVSEADVALVLVDPREGLNEKTRAILDALPSELKRIEIHSKSDLHAHAAGGFGTGAETVIALSAKTGDGLDALKRTLLREAGWQGEGEGLFLARTRHVNALKAAQEELSLAALCGNHQIELFAEHLRLAQVACGEITGEFTADDLLGVIFSRFCIGK.

Residues arginine 24, glutamate 81, and lysine 120 each coordinate (6S)-5-formyl-5,6,7,8-tetrahydrofolate. The TrmE-type G domain occupies 216–373 (GLNVVLVGAP…LKRTLLREAG (158 aa)). Asparagine 226 provides a ligand contact to K(+). GTP is bound by residues 226–231 (NVGKSS), 245–251 (TDIAGTT), and 270–273 (DTAG). Position 230 (serine 230) interacts with Mg(2+). 3 residues coordinate K(+): threonine 245, isoleucine 247, and threonine 250. Threonine 251 provides a ligand contact to Mg(2+). A (6S)-5-formyl-5,6,7,8-tetrahydrofolate-binding site is contributed by lysine 448.

The protein belongs to the TRAFAC class TrmE-Era-EngA-EngB-Septin-like GTPase superfamily. TrmE GTPase family. As to quaternary structure, homodimer. Heterotetramer of two MnmE and two MnmG subunits. It depends on K(+) as a cofactor.

It is found in the cytoplasm. Functionally, exhibits a very high intrinsic GTPase hydrolysis rate. Involved in the addition of a carboxymethylaminomethyl (cmnm) group at the wobble position (U34) of certain tRNAs, forming tRNA-cmnm(5)s(2)U34. This is tRNA modification GTPase MnmE from Neisseria meningitidis serogroup C (strain 053442).